The primary structure comprises 94 residues: ESAT-6-like protein EsxN (94 aa).

The protein belongs to the WXG100 family. ESAT-6 subfamily.

It is found in the secreted. This chain is ESAT-6-like protein EsxN, found in Mycobacterium bovis (strain ATCC BAA-935 / AF2122/97).